The sequence spans 396 residues: Protein Njmu-R1 (396 aa).

The segment at 1–78 (MLPSLQESMD…SGDDFSLSLA (78 aa)) is disordered. Phosphoserine occurs at positions 8 and 18. Acidic residues predominate over residues 9 to 24 (MDGDEKELESSEEGGS). Positions 58–67 (GSPSGTNAET) are enriched in polar residues.

Component of the complex WDR11 composed of C17orf75, FAM91A1 and WDR11; FAM91A1 and WDR11 are required for proper location of the complex. Interacts with TBC1D23; this interaction may be indirect and recruits TBC1D23 to AP-1-derived vesicles. Highly expressed in testis and also expressed in fetal testis.

Its subcellular location is the golgi apparatus. It localises to the trans-Golgi network. It is found in the cytoplasmic vesicle. In terms of biological role, as component of the WDR11 complex acts together with TBC1D23 to facilitate the golgin-mediated capture of vesicles generated using AP-1. May have a role in spermatogenesis. This is Protein Njmu-R1 (C17orf75) from Homo sapiens (Human).